A 432-amino-acid polypeptide reads, in one-letter code: Negative regulator of systemic acquired resistance SNI1 (432 aa).

In terms of assembly, interacts with SSN2. Binds to NTL9/CBNAC to promote its binding to promoters of target genes. Component of the SMC5-SMC6 complex which consists at least of SMC5 and SMC6B. Interacts with RAD17. Expressed at low levels in the veins.

The protein resides in the nucleus. Functionally, component of the SMC5-SMC6 complex, a complex involved in repair of DNA double-strand breaks by homologous recombination. Transcription repressor that prevents expression of pathogenesis-related genes (PR) via histone modifications and binding negative cis-acting elements at their promoters. Negative regulator of hypersensitive response (HR) and systemic acquired resistance (SAR) required to dampen the basal expression of pathogenesis related (PR) genes. Functions synergistically with NTL9/CBNAC as negative regulator of pathogen-induced PR1 expression and basal resistance to a virulent strain of P.syringae. Binds to the PR1 gene promoter to suppress defense response in the absence of pathogen challenge and is removed in response to induction. Negatively regulates both gene expression and DNA recombination during pathogen infection, thus being involved in short-term defense response and a long-term survival strategy. Prevents effective immune responses that involve activation of DNA damage responses, probably by negatively regulating the DNA damage sensors RAD17 and ATR. Negative regulator of defenses against the beet cyst nematode H.schachtii. The chain is Negative regulator of systemic acquired resistance SNI1 from Arabidopsis thaliana (Mouse-ear cress).